Consider the following 349-residue polypeptide: UDP-N-acetylenolpyruvoylglucosamine reductase (349 aa).

Residues 26–197 (FDARARVAAR…VAVTFRLPKA (172 aa)) enclose the FAD-binding PCMH-type domain. R173 is an active-site residue. The active-site Proton donor is the S249. The active site involves E345.

Belongs to the MurB family. The cofactor is FAD.

The protein localises to the cytoplasm. The enzyme catalyses UDP-N-acetyl-alpha-D-muramate + NADP(+) = UDP-N-acetyl-3-O-(1-carboxyvinyl)-alpha-D-glucosamine + NADPH + H(+). Its pathway is cell wall biogenesis; peptidoglycan biosynthesis. Cell wall formation. The sequence is that of UDP-N-acetylenolpyruvoylglucosamine reductase from Burkholderia pseudomallei (strain 1710b).